Consider the following 499-residue polypeptide: Phenylalanine--tRNA ligase alpha subunit (499 aa).

Residues threonine 330, 372–374 (QVE), and tyrosine 412 each bind L-phenylalanine. Residue glutamate 414 participates in Mg(2+) binding. An L-phenylalanine-binding site is contributed by phenylalanine 438.

It belongs to the class-II aminoacyl-tRNA synthetase family. Phe-tRNA synthetase alpha subunit type 2 subfamily. Tetramer of two alpha and two beta subunits. Mg(2+) serves as cofactor.

It is found in the cytoplasm. It catalyses the reaction tRNA(Phe) + L-phenylalanine + ATP = L-phenylalanyl-tRNA(Phe) + AMP + diphosphate + H(+). The chain is Phenylalanine--tRNA ligase alpha subunit (frs2) from Schizosaccharomyces pombe (strain 972 / ATCC 24843) (Fission yeast).